A 1322-amino-acid chain; its full sequence is Serine/threonine-protein phosphatase UIS2 (1322 aa).

The signal sequence occupies residues 1–22 (MNISKFFLIFIPLVLFKYPANN). An interaction with phosphorylated eIF2alpha region spans residues 1 to 535 (MNISKFFLIF…NELKSTSNAM (535 aa)). 2 stretches are compositionally biased toward basic and acidic residues: residues 267–279 (EKSA…KELN) and 288–326 (NSKK…KSEN). Disordered regions lie at residues 267–326 (EKSA…KSEN), 613–646 (NTNT…SENN), 1066–1087 (NETP…IQPN), and 1170–1196 (EVPD…NKDD). Over residues 631-646 (NNYTDGNEGNNNSENN) the composition is skewed to low complexity.

The cofactor is Mn(2+).

It carries out the reaction O-phospho-L-seryl-[protein] + H2O = L-seryl-[protein] + phosphate. Functionally, protein phosphatase which dephosphorylates 'Ser-59' of translation factor eIF2alpha during the liver stage, thus enabling protein translation. The protein is Serine/threonine-protein phosphatase UIS2 of Plasmodium berghei (strain Anka).